Reading from the N-terminus, the 198-residue chain is MPQLVLASTSSYRRALLEKLQLPFITDAPETDETPHAGESTEALVQRLASAKAQALAGRYPQHLIIGSDQVCVIDGKITGKPLQYSTAVKQLQQASGQCVTFYTGLTLLNTANNSINCTCETFDVYFRTLSQAEIDGYLLREQPWNCAGSFKSEGLGITLFERLAGRDPNTLIGLPLIALTQMLIEQGVNPLTVKPVE.

Asp69 functions as the Proton acceptor in the catalytic mechanism.

Belongs to the Maf family. YceF subfamily. The cofactor is a divalent metal cation.

The protein localises to the cytoplasm. It carries out the reaction N(7)-methyl-GTP + H2O = N(7)-methyl-GMP + diphosphate + H(+). Nucleoside triphosphate pyrophosphatase that hydrolyzes 7-methyl-GTP (m(7)GTP). May have a dual role in cell division arrest and in preventing the incorporation of modified nucleotides into cellular nucleic acids. In Yersinia pestis bv. Antiqua (strain Antiqua), this protein is 7-methyl-GTP pyrophosphatase.